The chain runs to 410 residues: Putative F-box/kelch-repeat protein At1g15680 (410 aa).

In terms of domain architecture, F-box spans 13 to 58; sequence CKRRIELPEELLAEIVARLPFISITRFKSVCKGWRSLIESTYFRHL. Kelch repeat units follow at residues 177 to 227 and 274 to 327; these read VVCM…SLKK and AYTT…YFPV.

The polypeptide is Putative F-box/kelch-repeat protein At1g15680 (Arabidopsis thaliana (Mouse-ear cress)).